The primary structure comprises 592 residues: MDSVETRYAHLLQPLRDLTKNWDIDLASQLGEYLEELDQMTISFDGGKTMMNFAEAALLIQGSTCIYGRKVELLHTLVFQTLDYISNKNKKRDKQGSSSDGNQEQAPSGSEGDGCEFDEIEQDENVNTHNITMKDPTEPVRIIRLPPESLIPAESHEKQKYPLLSLKGELLGSCKDFRINTFTMDEAGLMRLGSNTHFLKGVAEVQRDFSVHLPEPLQIEGEAAAANGGYDEEVDGGAEVLPPLEDHGMEVESDEWVERHEAPSEGRMLRPRPAVQPVSEEPKQLKETVDPWKLHDPYATFGEDKPLKAGKCYKVPAGLDESGKRKRKGPSKLQDFGTWFNKAFETADRKLKNGPTFPDLNYIFVSKMDQRLKVQRQMLRKRGVFVSDEELKKTYLEPENVEDQVEVIRHPDADGDDYSDEEHDNLADDLEPAEHLDDQEQIFQDLHMSRMSYEDLVKKSVDLFLVNSQKYAQETALSRRVKDWEDSINPHLAAQEISPAFDIHEYGDRIVHALSNVGVKKSFAFVVRGKENTEACRYMLAALQLANDYTVEVDKVDGLDCSVDTMELTLLTTQRAHERLKTYNATAATDIP.

Disordered stretches follow at residues 89–116 (NKKR…DGCE) and 261–285 (EAPS…PKQL). Positions 96-108 (GSSSDGNQEQAPS) are enriched in polar residues.

The protein belongs to the CND2 H2 (condensin-2 subunit 2) family. Component of the condensin-2 complex, which contains the smc2 and smc4 heterodimer, and three non SMC subunits, ncapg2, ncaph2 and ncapd3 that probably regulate the complex.

Its subcellular location is the nucleus. Functionally, regulatory subunit of the condensin-2 complex, a complex that seems to provide chromosomes with an additional level of organization and rigidity and in establishing mitotic chromosome architecture. The sequence is that of Condensin-2 complex subunit H2 (ncaph2) from Danio rerio (Zebrafish).